A 571-amino-acid chain; its full sequence is RNA polymerase sigma factor SigA (571 aa).

A sigma-70 factor domain-2 region spans residues 321 to 391 (MVESNLRLVI…TRAIADQART (71 aa)). The Interaction with polymerase core subunit RpoC signature appears at 345–348 (DLIQ). The segment at 400–476 (ETINKVLRGA…DTAVESPAEA (77 aa)) is sigma-70 factor domain-3. Residues 489–542 (VLKTLTDRERFVLIHRFGLLDGRPKTLEEVGSAFNVTRERIRQIEAKALRKMRH) form a sigma-70 factor domain-4 region. The H-T-H motif DNA-binding region spans 515–534 (LEEVGSAFNVTRERIRQIEA).

It belongs to the sigma-70 factor family. RpoD/SigA subfamily. As to quaternary structure, interacts transiently with the RNA polymerase catalytic core.

The protein localises to the cytoplasm. Functionally, sigma factors are initiation factors that promote the attachment of RNA polymerase to specific initiation sites and are then released. This sigma factor is the primary sigma factor during exponential growth. The chain is RNA polymerase sigma factor SigA from Chlamydia trachomatis serovar D (strain ATCC VR-885 / DSM 19411 / UW-3/Cx).